A 423-amino-acid chain; its full sequence is Cop9 signalosome complex subunit 12 (423 aa).

The PCI domain occupies 232–418; it reads GFFHLNEALL…RCIVFSKKEP (187 aa).

It belongs to the CSN12 family. As to quaternary structure, component of a COP9 signalosome-like (CSN) complex, composed of RRI1/CSN5, CSN9, RRI2/CSN10, PCI8/CSN11, CSN12 and CSI1. In the complex, it probably interacts directly with RRI1/CSN5, CSN9, RRI2/CSN10 and CSI1. Interacts with SEM1 and THP3.

It is found in the cytoplasm. The protein resides in the nucleus. Functionally, component of the COP9 signalosome (CSN) complex that acts as an regulator of the ubiquitin (Ubl) conjugation pathway by mediating the deneddylation of the cullin subunit of SCF-type E3 ubiquitin-protein ligase complexes. The CSN complex is involved in the regulation of the mating pheromone response. CSN12 forms a complex with THP3 that is recruited to transcribed genes and required for transcription elongation. The polypeptide is Cop9 signalosome complex subunit 12 (CSN12) (Saccharomyces cerevisiae (strain ATCC 204508 / S288c) (Baker's yeast)).